The chain runs to 165 residues: MSGGLLSLESALRTCKVNTELAARLQSHRTIGPASEKVCPVWNGLDAAGRQVCPDSFANKSPGCHSPMDRLHVENEISRPQYISYLSYGSQGVYGNEYGTIGGHRAAYPDNSIYGISGSFGQQLTSHVKPSMTECSCVRLGTQSQCVAGTSHNTGLSYKTLNGYY.

Belongs to the IIV-6 415R family.

This is an uncharacterized protein from Invertebrate iridescent virus 3 (IIV-3).